The following is a 962-amino-acid chain: Glycine dehydrogenase (decarboxylating) (962 aa).

An N6-(pyridoxal phosphate)lysine modification is found at Lys709.

This sequence belongs to the GcvP family. As to quaternary structure, the glycine cleavage system is composed of four proteins: P, T, L and H. Pyridoxal 5'-phosphate is required as a cofactor.

The catalysed reaction is N(6)-[(R)-lipoyl]-L-lysyl-[glycine-cleavage complex H protein] + glycine + H(+) = N(6)-[(R)-S(8)-aminomethyldihydrolipoyl]-L-lysyl-[glycine-cleavage complex H protein] + CO2. Functionally, the glycine cleavage system catalyzes the degradation of glycine. The P protein binds the alpha-amino group of glycine through its pyridoxal phosphate cofactor; CO(2) is released and the remaining methylamine moiety is then transferred to the lipoamide cofactor of the H protein. The chain is Glycine dehydrogenase (decarboxylating) from Shewanella baltica (strain OS155 / ATCC BAA-1091).